We begin with the raw amino-acid sequence, 433 residues long: Shikimate O-hydroxycinnamoyltransferase (433 aa).

Residue histidine 153 is the Proton acceptor of the active site. 4-coumaroyl-CoA is bound by residues 252–255, 284–290, and 370–373; these read SSYE, DGRSRLR, and SWVR. Catalysis depends on aspartate 380, which acts as the Proton acceptor.

It belongs to the plant acyltransferase family.

It catalyses the reaction shikimate + 4-coumaroyl-CoA = trans-4-coumaroylshikimate + CoA. Functionally, acyltransferase involved in the biosynthesis of lignin. Accepts caffeoyl-CoA and p-coumaroyl-CoA as substrates and transfers the acyl group on both shikimate and quinate acceptors. In Arabidopsis thaliana (Mouse-ear cress), this protein is Shikimate O-hydroxycinnamoyltransferase (HST).